Reading from the N-terminus, the 258-residue chain is Ribosomal RNA small subunit methyltransferase A (258 aa).

The S-adenosyl-L-methionine site is built by H13, L15, G41, D63, D87, and N106.

This sequence belongs to the class I-like SAM-binding methyltransferase superfamily. rRNA adenine N(6)-methyltransferase family. RsmA subfamily.

The protein localises to the cytoplasm. The enzyme catalyses adenosine(1518)/adenosine(1519) in 16S rRNA + 4 S-adenosyl-L-methionine = N(6)-dimethyladenosine(1518)/N(6)-dimethyladenosine(1519) in 16S rRNA + 4 S-adenosyl-L-homocysteine + 4 H(+). In terms of biological role, specifically dimethylates two adjacent adenosines (A1518 and A1519) in the loop of a conserved hairpin near the 3'-end of 16S rRNA in the 30S particle. May play a critical role in biogenesis of 30S subunits. This is Ribosomal RNA small subunit methyltransferase A from Cytophaga hutchinsonii (strain ATCC 33406 / DSM 1761 / CIP 103989 / NBRC 15051 / NCIMB 9469 / D465).